Here is a 511-residue protein sequence, read N- to C-terminus: Putative CBL-interacting protein kinase 13 (511 aa).

Residues 25-279 (FEVGKLLGQG…AEGIMENEWF (255 aa)) form the Protein kinase domain. ATP is bound by residues 31 to 39 (LGQGNFAKV) and lysine 54. The active-site Proton acceptor is the aspartate 147. The tract at residues 165 to 194 (DFGLSAVADGMRRDGLFHTFCGTPAYVAPE) is activation loop. Residues 307–340 (VDAPTSPPDTPRTVDSGDVGAAPTRPRKAGSLTS) form a disordered region. The NAF domain maps to 321 to 383 (DSGDVGAAPT…PGFDLSGLFD (63 aa)). The segment at 400-429 (KHTARFVSAAPVEVIVATLEAAAAAAGMAV) is PPI.

It belongs to the protein kinase superfamily. CAMK Ser/Thr protein kinase family. SNF1 subfamily. Mn(2+) serves as cofactor.

The enzyme catalyses L-seryl-[protein] + ATP = O-phospho-L-seryl-[protein] + ADP + H(+). The catalysed reaction is L-threonyl-[protein] + ATP = O-phospho-L-threonyl-[protein] + ADP + H(+). Functionally, CIPK serine-threonine protein kinases interact with CBL proteins. Binding of a CBL protein to the regulatory NAF domain of CIPK protein lead to the activation of the kinase in a calcium-dependent manner. This chain is Putative CBL-interacting protein kinase 13 (CIPK13), found in Oryza sativa subsp. japonica (Rice).